We begin with the raw amino-acid sequence, 937 residues long: Aconitate hydratase A (937 aa).

[4Fe-4S] cluster contacts are provided by C439, C505, and C508. A disordered region spans residues K898 to T921.

This sequence belongs to the aconitase/IPM isomerase family. Monomer. It depends on [4Fe-4S] cluster as a cofactor.

It carries out the reaction citrate = D-threo-isocitrate. It catalyses the reaction (2S,3R)-3-hydroxybutane-1,2,3-tricarboxylate = 2-methyl-cis-aconitate + H2O. The protein operates within carbohydrate metabolism; tricarboxylic acid cycle; isocitrate from oxaloacetate: step 2/2. Its pathway is organic acid metabolism; propanoate degradation. In terms of biological role, involved in the catabolism of short chain fatty acids (SCFA) via the tricarboxylic acid (TCA)(acetyl degradation route) and probably the 2-methylcitrate cycle I (propionate degradation route). Catalyzes the reversible isomerization of citrate to isocitrate via cis-aconitate. Could catalyze the hydration of 2-methyl-cis-aconitate to yield (2R,3S)-2-methylisocitrate. The apo form of AcnA functions as a RNA-binding regulatory protein. This is Aconitate hydratase A (acn) from Francisella tularensis subsp. holarctica (strain LVS).